The following is a 247-amino-acid chain: ATP synthase subunit a, chloroplastic (247 aa).

A run of 5 helical transmembrane segments spans residues 38-58 (QVLI…IVTV), 95-115 (VPFI…GALL), 134-154 (INTT…AGLS), 199-219 (LVVV…VMFL), and 220-240 (GLFT…AYIG).

This sequence belongs to the ATPase A chain family. F-type ATPases have 2 components, CF(1) - the catalytic core - and CF(0) - the membrane proton channel. CF(1) has five subunits: alpha(3), beta(3), gamma(1), delta(1), epsilon(1). CF(0) has four main subunits: a, b, b' and c.

It localises to the plastid. The protein resides in the chloroplast thylakoid membrane. Key component of the proton channel; it plays a direct role in the translocation of protons across the membrane. The protein is ATP synthase subunit a, chloroplastic of Populus alba (White poplar).